We begin with the raw amino-acid sequence, 443 residues long: Oxygen-dependent coproporphyrinogen-III oxidase, mitochondrial (443 aa).

The transit peptide at Met-1 to Arg-98 directs the protein to the mitochondrion. Residues Met-90–Glu-111 form a disordered region. Phosphoserine is present on Ser-101. Positions Val-182–Lys-191 are important for dimerization. A coproporphyrinogen III-binding site is contributed by Ser-233. His-247 functions as the Proton donor in the catalytic mechanism. Asn-249–Arg-251 contributes to the coproporphyrinogen III binding site. The interval Tyr-381 to Glu-417 is important for dimerization. At Lys-393 the chain carries N6-acetyllysine; alternate. Lys-393 is subject to N6-succinyllysine; alternate. Residue Gly-400 to Arg-402 participates in coproporphyrinogen III binding.

This sequence belongs to the aerobic coproporphyrinogen-III oxidase family. In terms of assembly, homodimer.

Its subcellular location is the mitochondrion intermembrane space. It catalyses the reaction coproporphyrinogen III + O2 + 2 H(+) = protoporphyrinogen IX + 2 CO2 + 2 H2O. Its pathway is porphyrin-containing compound metabolism; protoporphyrin-IX biosynthesis; protoporphyrinogen-IX from coproporphyrinogen-III (O2 route): step 1/1. Functionally, involved in the heme biosynthesis. Catalyzes the aerobic oxidative decarboxylation of propionate groups of rings A and B of coproporphyrinogen-III to yield the vinyl groups in protoporphyrinogen-IX. The polypeptide is Oxygen-dependent coproporphyrinogen-III oxidase, mitochondrial (Rattus norvegicus (Rat)).